The primary structure comprises 340 residues: CRISPR system Cmr subunit Cmr6 (340 aa).

It belongs to the CRISPR system Cmr6 family. As to quaternary structure, part of the type III-B Cmr ribonucleoprotein (RNP) complex, an elongated RNP with Cmr2 and Cmr3 as the base, with Cmr4 and Cmr5 forming a helical core along the mature crRNA (39 or 45 nt in length), while the complex is capped by Cmr6 and Cmr1. The 5' end of the crRNA is bound to Cmr2 and Cmr3, while Cmr6 and a Cmr1 subunit (Cmr1-1 or Cmr1-2) cap the 3' end of the crRNA. The target RNA lies antiparallel to the crRNA, with its 5' end near Cmr1 and Cmr6 and its 3' end near Cmr2 and Cmr3; major target cleavage occurs nears the junction of Cmr1/Cmr6 and Cmr4/Cmr, with minor cleavage occurring at 6 nt intervals which coincide with the proposed spacing of Cmr4 subunits. Interacts with Cmr4 and Cmr5.

The protein localises to the cytoplasm. In terms of biological role, CRISPR (clustered regularly interspaced short palindromic repeat), is an adaptive immune system that provides protection against mobile genetic elements (viruses, transposable elements and conjugative plasmids). CRISPR clusters contain sequences complementary to antecedent mobile elements and target invading nucleic acids. CRISPR clusters are transcribed and processed into CRISPR RNA (crRNA), formerly called psiRNA (prokaryotic silencing) in this organism. Part of the Cmr ribonucleoprotein complex which has divalent cation-dependent endoribonuclease activity specific for ssRNA complementary to the crRNA (target RNA), generating 5' hydroxy- and 3' phosphate or 2'-3' cyclic phosphate termini. Cmr4 is probably the subunit that cleaves target RNA. Cmr complex does not cleave ssDNA complementary to the crRNA. Cleavage of invading RNA is guided by the crRNA; substrate cleavage occurs a fixed distance (14 nt) from the 3' end of the crRNA. In vitro reconstitution shows Cmr1-2 and Cmr5 are not absolutely necessary for target cleavage. The chain is CRISPR system Cmr subunit Cmr6 from Pyrococcus furiosus (strain ATCC 43587 / DSM 3638 / JCM 8422 / Vc1).